The sequence spans 370 residues: Vasopressin V2 receptor (370 aa).

The segment covering 1 to 21 (MFMASTTSAVPWHLSQPTPAG) has biased composition (polar residues). The disordered stretch occupies residues 1–26 (MFMASTTSAVPWHLSQPTPAGNGSEG). Topologically, residues 1–38 (MFMASTTSAVPWHLSQPTPAGNGSEGELLTARDPLLAQ) are extracellular. Asparagine 22 is a glycosylation site (N-linked (GlcNAc...) asparagine). A helical transmembrane segment spans residues 39–63 (AELALLSTVFVAVALSNGLVLGALV). Residues 64–77 (RRGRRGRWAPMHVF) are Cytoplasmic-facing. Residues 78–98 (IGHLCLADLAVALFQVLPQLA) traverse the membrane as a helical segment. At 99–113 (WDATDRFRGPDALCR) the chain is on the extracellular side. The helical transmembrane segment at 114–135 (AVKYLQMVGMYASSYMILAMTL) threads the bilayer. Topologically, residues 136–159 (DRHRAICRPMLAHRHGGGTHWNRP) are cytoplasmic. A helical transmembrane segment spans residues 160 to 180 (VLLAWAFSLLFSLPQLFIFAQ). At 181–199 (RDVDGSGVLDCWARFAEPW) the chain is on the extracellular side. A helical transmembrane segment spans residues 200–219 (GLRAYVTWIALMVFVAPALG). Over 220-270 (IAACQVLIFREIHASLGPGPVPRAGGPRRGCRPGSPAEGARVSAAVAKTVK) the chain is Cytoplasmic. A helical membrane pass occupies residues 271–292 (MTLVIVIVYVLCWAPFFLVQLW). Over 293 to 307 (AAWDPEAPREGPPFV) the chain is Extracellular. A helical transmembrane segment spans residues 308-327 (LLMLLASLNSCTNPWIYASF). The Cytoplasmic segment spans residues 328–370 (SSSISSELRSLLCCTWRRAPPSPGPQEESCATASSFLAKDTPS). Residues cysteine 340 and cysteine 341 are each lipidated (S-palmitoyl cysteine). The interval 347–370 (PPSPGPQEESCATASSFLAKDTPS) is disordered.

It belongs to the G-protein coupled receptor 1 family. Vasopressin/oxytocin receptor subfamily. As to quaternary structure, interacts with ARRDC4. Identified in a complex containing at least ARRDC4, V2R and HGS. Interacts with TMEM147.

Its subcellular location is the cell membrane. Functionally, receptor for arginine vasopressin. The activity of this receptor is mediated by G proteins which activate adenylate cyclase. Involved in renal water reabsorption. The polypeptide is Vasopressin V2 receptor (AVPR2) (Bos taurus (Bovine)).